The chain runs to 178 residues: ATP synthase subunit delta (178 aa).

Belongs to the ATPase delta chain family. As to quaternary structure, F-type ATPases have 2 components, F(1) - the catalytic core - and F(0) - the membrane proton channel. F(1) has five subunits: alpha(3), beta(3), gamma(1), delta(1), epsilon(1). F(0) has three main subunits: a(1), b(2) and c(10-14). The alpha and beta chains form an alternating ring which encloses part of the gamma chain. F(1) is attached to F(0) by a central stalk formed by the gamma and epsilon chains, while a peripheral stalk is formed by the delta and b chains.

The protein resides in the cell inner membrane. In terms of biological role, f(1)F(0) ATP synthase produces ATP from ADP in the presence of a proton or sodium gradient. F-type ATPases consist of two structural domains, F(1) containing the extramembraneous catalytic core and F(0) containing the membrane proton channel, linked together by a central stalk and a peripheral stalk. During catalysis, ATP synthesis in the catalytic domain of F(1) is coupled via a rotary mechanism of the central stalk subunits to proton translocation. This protein is part of the stalk that links CF(0) to CF(1). It either transmits conformational changes from CF(0) to CF(1) or is implicated in proton conduction. The polypeptide is ATP synthase subunit delta (Pelodictyon phaeoclathratiforme (strain DSM 5477 / BU-1)).